The chain runs to 337 residues: Outer membrane protein U (337 aa).

Positions 1-21 (MKKTLIALSVSAAAMATGVNA) are cleaved as a signal peptide.

Belongs to the Gram-negative porin family. Homotrimer.

It is found in the cell outer membrane. In terms of biological role, forms pores that allow passive diffusion of small molecules across the outer membrane. The chain is Outer membrane protein U (ompU) from Vibrio parahaemolyticus serotype O3:K6 (strain RIMD 2210633).